We begin with the raw amino-acid sequence, 381 residues long: Tetraacyldisaccharide 4'-kinase (381 aa).

78–85 (AVGGTGKT) contributes to the ATP binding site.

This sequence belongs to the LpxK family.

The enzyme catalyses a lipid A disaccharide + ATP = a lipid IVA + ADP + H(+). Its pathway is glycolipid biosynthesis; lipid IV(A) biosynthesis; lipid IV(A) from (3R)-3-hydroxytetradecanoyl-[acyl-carrier-protein] and UDP-N-acetyl-alpha-D-glucosamine: step 6/6. Its function is as follows. Transfers the gamma-phosphate of ATP to the 4'-position of a tetraacyldisaccharide 1-phosphate intermediate (termed DS-1-P) to form tetraacyldisaccharide 1,4'-bis-phosphate (lipid IVA). In Syntrophobacter fumaroxidans (strain DSM 10017 / MPOB), this protein is Tetraacyldisaccharide 4'-kinase.